The chain runs to 316 residues: Beta-ketoacyl-[acyl-carrier-protein] synthase III (316 aa).

Residues C112 and H243 contribute to the active site. Residues Q244–R248 are ACP-binding. Residue N273 is part of the active site.

Belongs to the thiolase-like superfamily. FabH family. In terms of assembly, homodimer.

The protein localises to the cytoplasm. The enzyme catalyses malonyl-[ACP] + acetyl-CoA + H(+) = 3-oxobutanoyl-[ACP] + CO2 + CoA. It functions in the pathway lipid metabolism; fatty acid biosynthesis. In terms of biological role, catalyzes the condensation reaction of fatty acid synthesis by the addition to an acyl acceptor of two carbons from malonyl-ACP. Catalyzes the first condensation reaction which initiates fatty acid synthesis and may therefore play a role in governing the total rate of fatty acid production. Possesses both acetoacetyl-ACP synthase and acetyl transacylase activities. Its substrate specificity determines the biosynthesis of branched-chain and/or straight-chain of fatty acids. The polypeptide is Beta-ketoacyl-[acyl-carrier-protein] synthase III (Haemophilus influenzae (strain 86-028NP)).